A 207-amino-acid polypeptide reads, in one-letter code: uncharacterized protein (207 aa).

This is an uncharacterized protein from Haemophilus influenzae (strain ATCC 51907 / DSM 11121 / KW20 / Rd).